The chain runs to 118 residues: Large ribosomal subunit protein uL22 (118 aa).

This sequence belongs to the universal ribosomal protein uL22 family. In terms of assembly, part of the 50S ribosomal subunit.

This protein binds specifically to 23S rRNA; its binding is stimulated by other ribosomal proteins, e.g. L4, L17, and L20. It is important during the early stages of 50S assembly. It makes multiple contacts with different domains of the 23S rRNA in the assembled 50S subunit and ribosome. Functionally, the globular domain of the protein is located near the polypeptide exit tunnel on the outside of the subunit, while an extended beta-hairpin is found that lines the wall of the exit tunnel in the center of the 70S ribosome. The sequence is that of Large ribosomal subunit protein uL22 from Prosthecochloris aestuarii (strain DSM 271 / SK 413).